A 478-amino-acid polypeptide reads, in one-letter code: NADH-quinone oxidoreductase subunit N (478 aa).

Helical transmembrane passes span 5–25, 37–57, 68–88, 99–119, 121–141, 156–176, 199–219, 231–251, 268–288, 293–313, 320–340, 365–385, 401–421, and 446–466; these read LASP…VGVA, MLTL…ALGL, FAVM…VLSL, FEFP…VSAS, FMTL…LAAF, FVLG…IYGF, LTVG…AAPF, PTPV…AMML, VVAL…IGQT, LMAY…AAGS, LLIY…CILA, ALLL…SGFF, LLWG…YYYL, and VVAV…APIL.

This sequence belongs to the complex I subunit 2 family. As to quaternary structure, NDH-1 is composed of 14 different subunits. Subunits NuoA, H, J, K, L, M, N constitute the membrane sector of the complex.

Its subcellular location is the cell inner membrane. The catalysed reaction is a quinone + NADH + 5 H(+)(in) = a quinol + NAD(+) + 4 H(+)(out). NDH-1 shuttles electrons from NADH, via FMN and iron-sulfur (Fe-S) centers, to quinones in the respiratory chain. The immediate electron acceptor for the enzyme in this species is believed to be ubiquinone. Couples the redox reaction to proton translocation (for every two electrons transferred, four hydrogen ions are translocated across the cytoplasmic membrane), and thus conserves the redox energy in a proton gradient. The chain is NADH-quinone oxidoreductase subunit N from Granulibacter bethesdensis (strain ATCC BAA-1260 / CGDNIH1).